The sequence spans 132 residues: Fluoride-specific ion channel FluC 2 (132 aa).

The next 4 membrane-spanning stretches (helical) occupy residues 8–28, 41–61, 66–86, and 96–116; these read LQLE…GALL, LLVN…PAAP, LLGI…LAAV, and AALG…ALGF. The Na(+) site is built by Gly73 and Thr76.

It belongs to the fluoride channel Fluc/FEX (TC 1.A.43) family.

Its subcellular location is the cell inner membrane. It carries out the reaction fluoride(in) = fluoride(out). With respect to regulation, na(+) is not transported, but it plays an essential structural role and its presence is essential for fluoride channel function. In terms of biological role, fluoride-specific ion channel. Important for reducing fluoride concentration in the cell, thus reducing its toxicity. The protein is Fluoride-specific ion channel FluC 2 of Synechococcus sp. (strain CC9605).